Here is a 119-residue protein sequence, read N- to C-terminus: MSRVKRGVTARAKHNKVLKKAKGYYGARRKSFRIARQAVIKSGQYAYRDRRQRKRQFRALWIQRINAGARQHGLSYSRFINGLQQAGVDLDRKVLADLAVNDKAAFGALAEKAREALAA.

Belongs to the bacterial ribosomal protein bL20 family.

Binds directly to 23S ribosomal RNA and is necessary for the in vitro assembly process of the 50S ribosomal subunit. It is not involved in the protein synthesizing functions of that subunit. The chain is Large ribosomal subunit protein bL20 from Alkalilimnicola ehrlichii (strain ATCC BAA-1101 / DSM 17681 / MLHE-1).